The following is a 90-amino-acid chain: Early nodulin-36A (90 aa).

This Glycine max (Soybean) protein is Early nodulin-36A.